Reading from the N-terminus, the 398-residue chain is Large ribosomal subunit protein uL3 (398 aa).

Residues 1 to 10 are compositionally biased toward basic and acidic residues; the sequence is MSHRKFEAPR. A disordered region spans residues 1 to 34; it reads MSHRKFEAPRHGNLGFRPRKRAARHQGKVKSFPK. The segment covering 17 to 28 has biased composition (basic residues); it reads RPRKRAARHQGK.

This sequence belongs to the universal ribosomal protein uL3 family.

It is found in the cytoplasm. Its function is as follows. The L3 protein is a component of the large subunit of cytoplasmic ribosomes. The sequence is that of Large ribosomal subunit protein uL3 (rpl3) from Dictyostelium discoideum (Social amoeba).